Consider the following 64-residue polypeptide: Translation machinery-associated protein 7 homolog (64 aa).

A disordered region spans residues 1 to 64; sequence MSGREGGKKK…QGGIKKSGKK (64 aa). Residues 21–50 adopt a coiled-coil conformation; the sequence is EMDEDTAAFKAKQKEQQKALEAAKQKATKG. Over residues 32–44 the composition is skewed to basic and acidic residues; it reads KQKEQQKALEAAK.

This sequence belongs to the TMA7 family.

The protein is Translation machinery-associated protein 7 homolog of Anopheles gambiae (African malaria mosquito).